The chain runs to 465 residues: UDP-N-acetylmuramate--L-alanine ligase (465 aa).

Position 115 to 121 (115 to 121 (GTHGKTT)) interacts with ATP.

It belongs to the MurCDEF family.

The protein localises to the cytoplasm. The catalysed reaction is UDP-N-acetyl-alpha-D-muramate + L-alanine + ATP = UDP-N-acetyl-alpha-D-muramoyl-L-alanine + ADP + phosphate + H(+). The protein operates within cell wall biogenesis; peptidoglycan biosynthesis. Functionally, cell wall formation. The polypeptide is UDP-N-acetylmuramate--L-alanine ligase (Renibacterium salmoninarum (strain ATCC 33209 / DSM 20767 / JCM 11484 / NBRC 15589 / NCIMB 2235)).